A 234-amino-acid chain; its full sequence is Phosphatidylinositol phosphate synthase (234 aa).

2 consecutive transmembrane segments (helical) span residues 28–48 (LTPDAVTIIGTTASVAGALVL) and 54–70 (LFPGACVVWFFVLFDML). 31-34 (DAVT) lines the a CDP-1,2-diacyl-sn-glycerol pocket. Aspartate 68 and aspartate 71 together coordinate Mg(2+). 3 residues coordinate a CDP-1,2-diacyl-sn-glycerol: glycine 72, arginine 76, and threonine 82. Mg(2+)-binding residues include aspartate 89 and aspartate 93. A run of 4 helical transmembrane segments spans residues 91–110 (ACDRISDGAVFGGLLWWVAF), 116–134 (LLVVATLICLVTSQVISYI), 155–173 (RLIIVLAGAGVSDFPFIAW), and 179–197 (VAMWLLAVTSVITCGQRLY). Aspartate 93 functions as the Proton acceptor in the catalytic mechanism. A disordered region spans residues 211–234 (PSAPVRDDDAQGHPRSGDPGKTQR). Positions 215–228 (VRDDDAQGHPRSGD) are enriched in basic and acidic residues.

This sequence belongs to the CDP-alcohol phosphatidyltransferase class-I family. As to quaternary structure, homodimer. Mg(2+) is required as a cofactor.

It localises to the cell membrane. The enzyme catalyses a CDP-1,2-diacyl-sn-glycerol + 1D-myo-inositol 3-phosphate = a 1,2-diacyl-sn-glycero-3-phospho-(1D-myo-inositol-3-phosphate) + CMP + H(+). It carries out the reaction 1,2-di-(9Z-octadecenoyl)-sn-glycero-3-cytidine-5'-diphosphate + 1D-myo-inositol 3-phosphate = 1,2-di-(9Z-octadecenoyl)-sn-glycero-3-phospho-(1D-myo-inositol-3-phosphate) + CMP + H(+). It functions in the pathway phospholipid metabolism; phosphatidylinositol phosphate biosynthesis. Functionally, catalyzes the conjugation of the 1'-hydroxyl group of D-myo-inositol-3-phosphate (also named L-myo-inositol-1-phosphate) with a lipid tail of cytidine diphosphate diacylglycerol (CDP-DAG), forming phosphatidylinositol phosphate (PIP) and CMP. PIP is a precursor of phosphatidylinositol (PI) which is an essential lipid for mycobacteria required for formation of their cell wall. This is Phosphatidylinositol phosphate synthase from Mycobacterium marinum (strain ATCC BAA-535 / M).